A 557-amino-acid chain; its full sequence is Hyaluronan synthase 3 (557 aa).

The Cytoplasmic segment spans residues 1-10 (MPGKFQTGLR). The helical transmembrane segment at 11 to 31 (VLATCLFALLVLGGILVAYVT) threads the bilayer. Residues 32–44 (GYQFIHTDRHHLS) are Extracellular-facing. The helical transmembrane segment at 45–65 (FGLYGAILGLHLLSQSLFAFL) threads the bilayer. Residues 66–367 (EHRKMRGGGR…NALWFHKHHL (302 aa)) are Cytoplasmic-facing. Residues 368–388 (WMTYESVVTGFFPFFLVATVV) traverse the membrane as a helical segment. Residues 389 to 398 (QLFYRGRVWN) are Extracellular-facing. A helical transmembrane segment spans residues 399-419 (ILLFLLTVQLVGILKATYACI). The Cytoplasmic segment spans residues 420–430 (LRGNAEMIFMS). The helical transmembrane segment at 431 to 451 (LYSLLYMTSLLPAKIFAVITI) threads the bilayer. The Extracellular portion of the chain corresponds to 452–463 (KKSGWGTSGRRK). The chain crosses the membrane as a helical span at residues 464 to 484 (LVVNFMGMVPVSVWFCILLGG). Residues 485–501 (LVYTAYCQSHDPFTETE) lie on the Cytoplasmic side of the membrane. A helical membrane pass occupies residues 502–522 (LLFLLTGAILYGCYWVALLSL). The Extracellular segment spans residues 523–557 (YLALIARRCGKRQELYNLALEEVSEPEPAAKAIKP).

Belongs to the NodC/HAS family. Mg(2+) is required as a cofactor. In terms of processing, O-GlcNAcylation increases the hyaluronan synthase activity, HAS3 stability and its plasma membrane residence. The concentration of UDP-GlcNAc controls the level of O-GlcNAc modification.

It localises to the cell membrane. The protein resides in the golgi apparatus membrane. Its subcellular location is the golgi apparatus. The protein localises to the trans-Golgi network membrane. It is found in the cytoplasmic vesicle. It carries out the reaction [hyaluronan](n) + UDP-N-acetyl-alpha-D-glucosamine = N-acetyl-beta-D-glucosaminyl-(1-&gt;4)-[hyaluronan](n) + UDP + H(+). The catalysed reaction is N-acetyl-beta-D-glucosaminyl-(1-&gt;4)-[hyaluronan](n) + UDP-alpha-D-glucuronate = [hyaluronan](n+1) + UDP + H(+). Its pathway is glycan biosynthesis; hyaluronan biosynthesis. Functionally, catalyzes the addition of GlcNAc or GlcUA monosaccharides to the nascent hyaluronan polymer. Therefore, it is essential to hyaluronan synthesis a major component of most extracellular matrices that has a structural role in tissues architectures and regulates cell adhesion, migration and differentiation. This is one of three isoenzymes responsible for cellular hyaluronan synthesis. The chain is Hyaluronan synthase 3 (has3) from Xenopus laevis (African clawed frog).